Consider the following 264-residue polypeptide: Protein-L-isoaspartate O-methyltransferase (264 aa).

The disordered stretch occupies residues 1–49; sequence MRKPVGSKDGSGVYSRQGLDGYTPANSNTRISTATLPRPEPLRPAASSA. Polar residues predominate over residues 24–35; it reads PANSNTRISTAT. Serine 112 is a catalytic residue.

It belongs to the methyltransferase superfamily. L-isoaspartyl/D-aspartyl protein methyltransferase family.

It is found in the cytoplasm. It carries out the reaction [protein]-L-isoaspartate + S-adenosyl-L-methionine = [protein]-L-isoaspartate alpha-methyl ester + S-adenosyl-L-homocysteine. Functionally, catalyzes the methyl esterification of L-isoaspartyl residues in peptides and proteins that result from spontaneous decomposition of normal L-aspartyl and L-asparaginyl residues. It plays a role in the repair and/or degradation of damaged proteins. This Bordetella avium (strain 197N) protein is Protein-L-isoaspartate O-methyltransferase.